A 910-amino-acid chain; its full sequence is Leucine--tRNA ligase (910 aa).

Positions 50-60 match the 'HIGH' region motif; it reads PYTNGSLHVGH. The 'KMSKS' region motif lies at 611–615; sequence KISKS. An ATP-binding site is contributed by Lys-614.

This sequence belongs to the class-I aminoacyl-tRNA synthetase family.

It localises to the cytoplasm. The catalysed reaction is tRNA(Leu) + L-leucine + ATP = L-leucyl-tRNA(Leu) + AMP + diphosphate. The protein is Leucine--tRNA ligase of Thermoplasma volcanium (strain ATCC 51530 / DSM 4299 / JCM 9571 / NBRC 15438 / GSS1).